The primary structure comprises 214 residues: Riboflavin kinase (214 aa).

The tract at residues 1 to 26 (MRPDGPRDPVAGPDSGPEPPYPVRLS) is disordered. Positions 44 and 46 each coordinate Mg(2+). Glutamate 116 functions as the Nucleophile in the catalytic mechanism.

It belongs to the flavokinase family. Zn(2+) is required as a cofactor. It depends on Mg(2+) as a cofactor.

The enzyme catalyses riboflavin + ATP = FMN + ADP + H(+). Its pathway is cofactor biosynthesis; FMN biosynthesis; FMN from riboflavin (ATP route): step 1/1. Its function is as follows. Catalyzes the phosphorylation of riboflavin (vitamin B2) to form flavin mononucleotide (FMN) coenzyme. The polypeptide is Riboflavin kinase (fmn1) (Aspergillus fumigatus (strain ATCC MYA-4609 / CBS 101355 / FGSC A1100 / Af293) (Neosartorya fumigata)).